The primary structure comprises 298 residues: MTDIAFLGLGNMGGPMAANLLKAGHRVNVFDLQPKAVLGLVEQGAQGADSALQCCEGAEVVISMLPAGQHVESLYLGDDGLLARVAGKPLLIDCSTIAPETARKVAEAAAAKGLTLLDAPVSGGVGGARAGTLSFIVGGPAEGFARARPVLENMGRNIFHAGDHGAGQVAKICNNMLLGILMAGTAEALALGVKNGLDPAVLSEVMKQSSGGNWALNLYNPWPGVMPQAPASNGYAGGFQVRLMNKDLGLALANAQAVQASTPLGALARNLFSLHAQADAEHEGLDFSSIQKLYRGKD.

Residues 2 to 30 (TDIA…VNVF), 65 to 66 (LP), and T96 each bind NAD(+). K171 is a catalytic residue. An NAD(+)-binding site is contributed by K246.

The protein belongs to the HIBADH-related family.

The catalysed reaction is 3-hydroxy-2-methylpropanoate + NAD(+) = 2-methyl-3-oxopropanoate + NADH + H(+). It functions in the pathway amino-acid degradation; L-valine degradation. This chain is 3-hydroxyisobutyrate dehydrogenase, found in Pseudomonas aeruginosa (strain ATCC 15692 / DSM 22644 / CIP 104116 / JCM 14847 / LMG 12228 / 1C / PRS 101 / PAO1).